The sequence spans 355 residues: Adenine deaminase (355 aa).

Residues His-24, His-26, and His-204 each contribute to the Zn(2+) site. Residue Glu-207 is the Proton donor of the active site. Residue Asp-285 coordinates Zn(2+). Asp-286 provides a ligand contact to substrate.

Belongs to the metallo-dependent hydrolases superfamily. Adenosine and AMP deaminases family. Adenine deaminase type 2 subfamily. Zn(2+) is required as a cofactor.

The catalysed reaction is adenine + H2O + H(+) = hypoxanthine + NH4(+). Functionally, catalyzes the hydrolytic deamination of adenine to hypoxanthine. Plays an important role in the purine salvage pathway and in nitrogen catabolism. This Geotalea uraniireducens (strain Rf4) (Geobacter uraniireducens) protein is Adenine deaminase.